Here is a 475-residue protein sequence, read N- to C-terminus: Melanopsin (475 aa).

The Extracellular segment spans residues 1 to 21 (MGTQHRIKVDVPDRVLYTVGS). The helical transmembrane segment at 22-42 (CVLVIGSIGITGNLLVLYAFY) threads the bilayer. At 43–53 (SNKRLRTPANY) the chain is on the cytoplasmic side. The chain crosses the membrane as a helical span at residues 54–74 (FIMNLAASDFLMSATQAPICF). Over 75-90 (LNSMHTEWILGDIGCN) the chain is Extracellular. Cysteines 89 and 167 form a disulfide. The helical transmembrane segment at 91–111 (FYVFCGALFGITSMMTLLAIS) threads the bilayer. Over 112–134 (VDRYCVITKPLQSIKRSSKKRSC) the chain is Cytoplasmic. The helical transmembrane segment at 135 to 155 (IIIAFVWLYSLGWSVCPLFGW) threads the bilayer. Residues 156 to 187 (SSYIPEGLMISCTWDYVSYSPANRSYTMMLCC) lie on the Extracellular side of the membrane. A glycan (N-linked (GlcNAc...) asparagine) is linked at N178. Residues 188–208 (FVFFIPLIIIFHCYLFMFLAI) traverse the membrane as a helical segment. The Cytoplasmic portion of the chain corresponds to 209–240 (RSTGRNVQKLGSTYNRKSNVSQSVKSEWKLAK). The chain crosses the membrane as a helical span at residues 241 to 261 (IAFVAIVVFVLSWSPYACVTL). The Extracellular segment spans residues 262–276 (IAWAGYAKTLNPYSK). The chain crosses the membrane as a helical span at residues 277-297 (SVPAVIAKASAIYNPIIYAII). An N6-(retinylidene)lysine modification is found at K284. Residues 298-475 (HPRYRRTIRS…EQHQMEASSH (178 aa)) lie on the Cytoplasmic side of the membrane. Disordered stretches follow at residues 370 to 390 (VEAARKKQQPHRSRSFSKQAE) and 445 to 475 (PFGLNSSSTEENADTSDMEVQEQHQMEASSH). Over residues 375–384 (KKQQPHRSRS) the composition is skewed to basic residues. A compositionally biased stretch (polar residues) spans 445 to 454 (PFGLNSSSTE). The segment covering 455–464 (ENADTSDMEV) has biased composition (acidic residues). Residues 465–475 (QEQHQMEASSH) are compositionally biased toward basic and acidic residues.

The protein belongs to the G-protein coupled receptor 1 family. Opsin subfamily. In terms of tissue distribution, highest level in the lateral eye. Low level in the brain.

It is found in the cell membrane. Photoreceptor implicated in non-image-forming responses to light. May be able to isomerize covalently bound all-trans retinal back to 11-cis retinal. The sequence is that of Melanopsin (OPN4) from Podarcis siculus (Italian wall lizard).